Here is a 225-residue protein sequence, read N- to C-terminus: Phosphatidylserine decarboxylase proenzyme (225 aa).

Catalysis depends on serine 188, which acts as the Schiff-base intermediate with substrate; via pyruvic acid. Serine 188 is modified (pyruvic acid (Ser); by autocatalysis).

Belongs to the phosphatidylserine decarboxylase family. PSD-A subfamily. As to quaternary structure, heterodimer of a large membrane-associated beta subunit and a small pyruvoyl-containing alpha subunit. The cofactor is pyruvate. Is synthesized initially as an inactive proenzyme. Formation of the active enzyme involves a self-maturation process in which the active site pyruvoyl group is generated from an internal serine residue via an autocatalytic post-translational modification. Two non-identical subunits are generated from the proenzyme in this reaction, and the pyruvate is formed at the N-terminus of the alpha chain, which is derived from the carboxyl end of the proenzyme. The post-translation cleavage follows an unusual pathway, termed non-hydrolytic serinolysis, in which the side chain hydroxyl group of the serine supplies its oxygen atom to form the C-terminus of the beta chain, while the remainder of the serine residue undergoes an oxidative deamination to produce ammonia and the pyruvoyl prosthetic group on the alpha chain.

The protein resides in the cell membrane. The catalysed reaction is a 1,2-diacyl-sn-glycero-3-phospho-L-serine + H(+) = a 1,2-diacyl-sn-glycero-3-phosphoethanolamine + CO2. It participates in phospholipid metabolism; phosphatidylethanolamine biosynthesis; phosphatidylethanolamine from CDP-diacylglycerol: step 2/2. Functionally, catalyzes the formation of phosphatidylethanolamine (PtdEtn) from phosphatidylserine (PtdSer). In Parvibaculum lavamentivorans (strain DS-1 / DSM 13023 / NCIMB 13966), this protein is Phosphatidylserine decarboxylase proenzyme.